Reading from the N-terminus, the 102-residue chain is Monothiol glutaredoxin-S7 (102 aa).

In terms of domain architecture, Glutaredoxin spans 1–101 (MEKLQKMTSE…PMLKRVGALW (101 aa)). Cys21 provides a ligand contact to [2Fe-2S] cluster. The Responsive for interaction with TGA factors signature appears at 99-102 (ALWL).

It belongs to the glutaredoxin family. CC-type subfamily.

It is found in the cytoplasm. The protein resides in the nucleus. May only reduce GSH-thiol disulfides, but not protein disulfides. The sequence is that of Monothiol glutaredoxin-S7 (GRXS7) from Arabidopsis thaliana (Mouse-ear cress).